A 169-amino-acid polypeptide reads, in one-letter code: NADH-quinone oxidoreductase subunit B (169 aa).

Residues cysteine 42, cysteine 43, cysteine 107, and cysteine 136 each coordinate [4Fe-4S] cluster.

Belongs to the complex I 20 kDa subunit family. NDH-1 is composed of 14 different subunits. Subunits NuoB, C, D, E, F, and G constitute the peripheral sector of the complex. It depends on [4Fe-4S] cluster as a cofactor.

The protein localises to the cell inner membrane. It catalyses the reaction a quinone + NADH + 5 H(+)(in) = a quinol + NAD(+) + 4 H(+)(out). NDH-1 shuttles electrons from NADH, via FMN and iron-sulfur (Fe-S) centers, to quinones in the respiratory chain. The immediate electron acceptor for the enzyme in this species is believed to be ubiquinone. Couples the redox reaction to proton translocation (for every two electrons transferred, four hydrogen ions are translocated across the cytoplasmic membrane), and thus conserves the redox energy in a proton gradient. This Nitratiruptor sp. (strain SB155-2) protein is NADH-quinone oxidoreductase subunit B.